Reading from the N-terminus, the 330-residue chain is Short chain dehydrogenase macD (330 aa).

Positions 57, 86, 113, 204, and 208 each coordinate NADP(+). The active-site Proton donor is the Tyr-204. The active-site Lowers pKa of active site Tyr is Lys-208.

This sequence belongs to the short-chain dehydrogenases/reductases (SDR) family.

It functions in the pathway secondary metabolite biosynthesis; terpenoid biosynthesis. Functionally, short chain dehydrogenase; part of the gene cluster that mediates the biosynthesis of macrophorins, isoprenoid epoxycyclohexenones containing cyclized drimane moieties. The first step of the pathway is the synthesis of 6-methylsalicylic acid (6-MSA) by the polyketide synthase macA. 6-MSA is then converted to m-cresol by the decarboxylase macB. The cytochrome P450 monooxygenase macC then catalyzes the oxidation of m-cresol to toluquinol. Epoxidation of toluquinol is then performed by the short chain dehydrogenase macD, with the help of macE, and a further prenylation by macG leads to 7-deacetoxyyanuthone A. The next step is the hydroxylation of C-22 of 7-deacetoxyyanuthone A by the cytochrome P450 monooxygenase macH to yield 22-deacetylyanuthone A. O-Mevalon transferase macI then attaches mevalon to the hydroxyl group of 22-deacetylyanuthone A to produce yanuthone E. The terpene cyclase macJ catalyzes the cyclization of 22-deacetylyanuthone A to macrophorin A. MacJ is also able to catalyze cyclization of yanuthone E and 7-deacetoxyyanuthone A to their corresponding macrophorins. The macJ products can be further modified by macH and macJ, as well as by the FAD-dependent monooxygenase macF, to produce additional macrophorins, including 4'-oxomacrophorin A, 4'-oxomacrophorin D and 4'-oxomacrophorin E. In Penicillium terrestre, this protein is Short chain dehydrogenase macD.